The primary structure comprises 173 residues: Crossover junction endodeoxyribonuclease RuvC (173 aa).

Active-site residues include Asp8, Glu67, and Asp139. Residues Asp8, Glu67, and Asp139 each coordinate Mg(2+).

It belongs to the RuvC family. As to quaternary structure, homodimer which binds Holliday junction (HJ) DNA. The HJ becomes 2-fold symmetrical on binding to RuvC with unstacked arms; it has a different conformation from HJ DNA in complex with RuvA. In the full resolvosome a probable DNA-RuvA(4)-RuvB(12)-RuvC(2) complex forms which resolves the HJ. Mg(2+) serves as cofactor.

The protein resides in the cytoplasm. The enzyme catalyses Endonucleolytic cleavage at a junction such as a reciprocal single-stranded crossover between two homologous DNA duplexes (Holliday junction).. The RuvA-RuvB-RuvC complex processes Holliday junction (HJ) DNA during genetic recombination and DNA repair. Endonuclease that resolves HJ intermediates. Cleaves cruciform DNA by making single-stranded nicks across the HJ at symmetrical positions within the homologous arms, yielding a 5'-phosphate and a 3'-hydroxyl group; requires a central core of homology in the junction. The consensus cleavage sequence is 5'-(A/T)TT(C/G)-3'. Cleavage occurs on the 3'-side of the TT dinucleotide at the point of strand exchange. HJ branch migration catalyzed by RuvA-RuvB allows RuvC to scan DNA until it finds its consensus sequence, where it cleaves and resolves the cruciform DNA. The sequence is that of Crossover junction endodeoxyribonuclease RuvC from Shewanella sediminis (strain HAW-EB3).